The following is a 919-amino-acid chain: uncharacterized protein (919 aa).

Residues 1–15 (MEALILLSSQQSGSI) are compositionally biased toward low complexity. 6 disordered regions span residues 1-167 (MEAL…DLEN), 179-312 (RFKP…STPS), 415-491 (HIYE…RLSL), 553-739 (QQQQ…TIKP), 751-863 (THNE…NNII), and 883-906 (LNINHQDGPNSASSTPRLPTDHIN). Residues 16–25 (KNNCASTSDI) are compositionally biased toward polar residues. Composition is skewed to low complexity over residues 34–75 (IVIV…SSSS), 96–107 (SSPSSSPNTPKT), and 141–153 (TPTTTSTSTTPIK). The span at 154 to 167 (PVKDPKEKEKDLEN) shows a compositional bias: basic and acidic residues. Residues 186–292 (NNTNNNNNIN…QQSSPTSSQT (107 aa)) show a composition bias toward low complexity. Residues 420-433 (PNENNNGGSFQKPN) show a composition bias toward polar residues. Composition is skewed to low complexity over residues 450-471 (GVSGSPSHSPRVSQSPRVPSHP), 553-564 (QQQQQQQQQSSS), 573-589 (SQPQNSSSPRQPSQTPQ), and 618-635 (HMPQSPHMPHSPHLMPHS). Residues 678 to 695 (YGSSPNLNGGKGSNNFLQ) show a composition bias toward polar residues. Low complexity predominate over residues 712 to 723 (SSVDSYSNSSPT). A compositionally biased stretch (polar residues) spans 754–768 (ENYMSSPRQPLSPHN). The span at 785-797 (PHEHCNYIDKNDE) shows a compositional bias: basic and acidic residues. The span at 798 to 863 (YYSNNNNNNN…NNNNNNNNII (66 aa)) shows a compositional bias: low complexity. A compositionally biased stretch (polar residues) spans 883–899 (LNINHQDGPNSASSTPR).

This is an uncharacterized protein from Dictyostelium discoideum (Social amoeba).